The following is a 326-amino-acid chain: Probable oxidoreductase patJ (326 aa).

The disordered stretch occupies residues 287 to 326 (HGVQPGSVNGSNGHSTGVESKLEQLGSRAQRRVVIDDAGK). Residues 292-304 (GSVNGSNGHSTGV) show a composition bias toward polar residues.

The protein belongs to the oxidoreductase OpS7 family.

The protein localises to the vacuole lumen. Its subcellular location is the cytoplasmic vesicle lumen. Its pathway is mycotoxin biosynthesis; patulin biosynthesis. Functionally, probable oxidoreductase; part of the gene cluster that mediates the biosynthesis of patulin, an acetate-derived tetraketide mycotoxin produced by several fungal species that shows antimicrobial properties against several bacteria. PatJ acts with patO in the vacuole to convert gentisyl alcohol to isoepoxydon. The pathway begins with the synthesis of 6-methylsalicylic acid by the polyketide synthase (PKS) patK via condensation of acetate and malonate units. The 6-methylsalicylic acid decarboxylase patG then catalyzes the decarboxylation of 6-methylsalicylic acid to yield m-cresol (also known as 3-methylphenol). These first reactions occur in the cytosol. The intermediate m-cresol is then transported into the endoplasmic reticulum where the cytochrome P450 monooxygenase patH converts it to m-hydroxybenzyl alcohol, which is further converted to gentisyl alcohol by the cytochrome P450 monooxygenase patI. The oxidoreductases patJ and patO further convert gentisyl alcohol to isoepoxydon in the vacuole. PatN catalyzes then the transformation of isoepoxydon into phyllostine. The cluster protein patF is responsible for the conversion from phyllostine to neopatulin whereas the alcohol dehydrogenase patD converts neopatulin to E-ascladiol. The steps between isoepoxydon and E-ascladiol occur in the cytosol, and E-ascladiol is probably secreted to the extracellular space by one of the cluster-specific transporters patC or patM. Finally, the secreted patulin synthase patE catalyzes the conversion of E-ascladiol to patulin. This Penicillium expansum (Blue mold rot fungus) protein is Probable oxidoreductase patJ.